We begin with the raw amino-acid sequence, 161 residues long: Nucleotide-binding protein RSc2549 (161 aa).

This sequence belongs to the YajQ family.

Functionally, nucleotide-binding protein. This is Nucleotide-binding protein RSc2549 from Ralstonia nicotianae (strain ATCC BAA-1114 / GMI1000) (Ralstonia solanacearum).